The sequence spans 282 residues: Peptidoglycan-recognition protein LD (282 aa).

The disordered stretch occupies residues Met1–Gly29. The Cytoplasmic portion of the chain corresponds to Met1–Cys88. The chain crosses the membrane as a helical span at residues Phe89–Leu111. Residues Trp112–Lys282 lie on the Extracellular side of the membrane. A disulfide bridge links Cys162 with Cys166. Residue Asn222 is glycosylated (N-linked (GlcNAc...) asparagine).

This sequence belongs to the N-acetylmuramoyl-L-alanine amidase 2 family. Expressed in uninduced hemocytes and mbn-2 cells.

It is found in the cell membrane. Peptidoglycan-recognition protein probably involved in innate immunity by binding to peptidoglycans (PGN) of bacteria and activating the immune response. The polypeptide is Peptidoglycan-recognition protein LD (PGRP-LD) (Drosophila melanogaster (Fruit fly)).